Reading from the N-terminus, the 450-residue chain is Bifunctional protein GlmU (450 aa).

The segment at 1–226 (MLAVAVLAAG…PDEVNGINNR (226 aa)) is pyrophosphorylase. Residues 7-10 (LAAG), K21, Q73, and 78-79 (GT) contribute to the UDP-N-acetyl-alpha-D-glucosamine site. D103 serves as a coordination point for Mg(2+). Residues G140, E155, N170, and N224 each contribute to the UDP-N-acetyl-alpha-D-glucosamine site. Mg(2+) is bound at residue N224. The interval 227 to 247 (QQLAQCETMLQERLRHHWMAE) is linker. Residues 248–450 (GVTFVDPASC…IKENWAGPQG (203 aa)) are N-acetyltransferase. UDP-N-acetyl-alpha-D-glucosamine contacts are provided by R329 and K347. H359 (proton acceptor) is an active-site residue. The UDP-N-acetyl-alpha-D-glucosamine site is built by Y362 and N373. Acetyl-CoA contacts are provided by residues A376, 382 to 383 (NY), A419, and R436.

The protein in the N-terminal section; belongs to the N-acetylglucosamine-1-phosphate uridyltransferase family. It in the C-terminal section; belongs to the transferase hexapeptide repeat family. Homotrimer. The cofactor is Mg(2+).

Its subcellular location is the cytoplasm. It carries out the reaction alpha-D-glucosamine 1-phosphate + acetyl-CoA = N-acetyl-alpha-D-glucosamine 1-phosphate + CoA + H(+). The catalysed reaction is N-acetyl-alpha-D-glucosamine 1-phosphate + UTP + H(+) = UDP-N-acetyl-alpha-D-glucosamine + diphosphate. It functions in the pathway nucleotide-sugar biosynthesis; UDP-N-acetyl-alpha-D-glucosamine biosynthesis; N-acetyl-alpha-D-glucosamine 1-phosphate from alpha-D-glucosamine 6-phosphate (route II): step 2/2. The protein operates within nucleotide-sugar biosynthesis; UDP-N-acetyl-alpha-D-glucosamine biosynthesis; UDP-N-acetyl-alpha-D-glucosamine from N-acetyl-alpha-D-glucosamine 1-phosphate: step 1/1. It participates in bacterial outer membrane biogenesis; LPS lipid A biosynthesis. Its function is as follows. Catalyzes the last two sequential reactions in the de novo biosynthetic pathway for UDP-N-acetylglucosamine (UDP-GlcNAc). The C-terminal domain catalyzes the transfer of acetyl group from acetyl coenzyme A to glucosamine-1-phosphate (GlcN-1-P) to produce N-acetylglucosamine-1-phosphate (GlcNAc-1-P), which is converted into UDP-GlcNAc by the transfer of uridine 5-monophosphate (from uridine 5-triphosphate), a reaction catalyzed by the N-terminal domain. The protein is Bifunctional protein GlmU of Synechococcus sp. (strain RCC307).